Here is a 488-residue protein sequence, read N- to C-terminus: Glycogen synthase (488 aa).

Lysine 16 is a binding site for ADP-alpha-D-glucose.

Belongs to the glycosyltransferase 1 family. Bacterial/plant glycogen synthase subfamily.

It carries out the reaction [(1-&gt;4)-alpha-D-glucosyl](n) + ADP-alpha-D-glucose = [(1-&gt;4)-alpha-D-glucosyl](n+1) + ADP + H(+). It participates in glycan biosynthesis; glycogen biosynthesis. Functionally, synthesizes alpha-1,4-glucan chains using ADP-glucose. The polypeptide is Glycogen synthase (Marinobacter nauticus (strain ATCC 700491 / DSM 11845 / VT8) (Marinobacter aquaeolei)).